The sequence spans 118 residues: Ribonuclease P protein component (118 aa).

It belongs to the RnpA family. Consists of a catalytic RNA component (M1 or rnpB) and a protein subunit.

The enzyme catalyses Endonucleolytic cleavage of RNA, removing 5'-extranucleotides from tRNA precursor.. RNaseP catalyzes the removal of the 5'-leader sequence from pre-tRNA to produce the mature 5'-terminus. It can also cleave other RNA substrates such as 4.5S RNA. The protein component plays an auxiliary but essential role in vivo by binding to the 5'-leader sequence and broadening the substrate specificity of the ribozyme. The sequence is that of Ribonuclease P protein component from Photobacterium profundum (strain SS9).